The primary structure comprises 144 residues: Bacilliredoxin BCE_4227 (144 aa).

Belongs to the bacilliredoxin family.

The sequence is that of Bacilliredoxin BCE_4227 from Bacillus cereus (strain ATCC 10987 / NRS 248).